The following is a 527-amino-acid chain: Rhamnogalacturonate lyase A (527 aa).

An N-terminal signal peptide occupies residues 1 to 19 (MLKASLLSFVAFTAQVAHA). 2 disulfide bridges follow: cysteine 49–cysteine 92 and cysteine 183–cysteine 192. An N-linked (GlcNAc...) asparagine glycan is attached at asparagine 350.

This sequence belongs to the polysaccharide lyase 4 family.

The protein localises to the secreted. The enzyme catalyses Endotype eliminative cleavage of L-alpha-rhamnopyranosyl-(1-&gt;4)-alpha-D-galactopyranosyluronic acid bonds of rhamnogalacturonan I domains in ramified hairy regions of pectin leaving L-rhamnopyranose at the reducing end and 4-deoxy-4,5-unsaturated D-galactopyranosyluronic acid at the non-reducing end.. Pectinolytic enzyme that has a positive effect in the apple hot-mash liquefaction process. This endolyase hydrolyzes the alpha-L-rhamnopyranosyl-(1,4)-alpha-D-galacturonopyranosyl glycosidic linkage by beta-elimination, thereby generating oligosaccharides terminating at the non-reducing end with a hex-4-enopyranosyluronic acid residue. The polypeptide is Rhamnogalacturonate lyase A (rglA) (Aspergillus aculeatus).